A 208-amino-acid chain; its full sequence is MVDNKDFNEELKENIQEELDNETKAENPNIDEEVEEVSEDIKADEKVIDFEELQALKEENTMFKSKTKKLENELEALKDRLLRISAEYENYRKRTDKEKERIYTDACEDVLIKMLPVLDNLERALAVDGTVEDLKKGVEMTVRQFEDALEKLQVEEISTENGFDPELHQAMMVVEQEGAEPNQVAQVFQKGYKRGDKVIRHSMVTVTK.

Positions 1–25 (MVDNKDFNEELKENIQEELDNETKA) are enriched in basic and acidic residues. The tract at residues 1 to 38 (MVDNKDFNEELKENIQEELDNETKAENPNIDEEVEEVS) is disordered. Acidic residues predominate over residues 29–38 (NIDEEVEEVS).

It belongs to the GrpE family. As to quaternary structure, homodimer.

It localises to the cytoplasm. Participates actively in the response to hyperosmotic and heat shock by preventing the aggregation of stress-denatured proteins, in association with DnaK and GrpE. It is the nucleotide exchange factor for DnaK and may function as a thermosensor. Unfolded proteins bind initially to DnaJ; upon interaction with the DnaJ-bound protein, DnaK hydrolyzes its bound ATP, resulting in the formation of a stable complex. GrpE releases ADP from DnaK; ATP binding to DnaK triggers the release of the substrate protein, thus completing the reaction cycle. Several rounds of ATP-dependent interactions between DnaJ, DnaK and GrpE are required for fully efficient folding. This chain is Protein GrpE, found in Clostridium perfringens (strain 13 / Type A).